A 919-amino-acid chain; its full sequence is Alanine--tRNA ligase (919 aa).

The Zn(2+) site is built by His565, His569, Cys667, and His671.

This sequence belongs to the class-II aminoacyl-tRNA synthetase family. It depends on Zn(2+) as a cofactor.

The protein resides in the cytoplasm. The catalysed reaction is tRNA(Ala) + L-alanine + ATP = L-alanyl-tRNA(Ala) + AMP + diphosphate. Its function is as follows. Catalyzes the attachment of alanine to tRNA(Ala) in a two-step reaction: alanine is first activated by ATP to form Ala-AMP and then transferred to the acceptor end of tRNA(Ala). Also edits incorrectly charged Ser-tRNA(Ala) and Gly-tRNA(Ala) via its editing domain. The protein is Alanine--tRNA ligase of Leptospira biflexa serovar Patoc (strain Patoc 1 / Ames).